The sequence spans 338 residues: UbiA prenyltransferase domain-containing protein 1 (338 aa).

The tract at residues Met1–Glu39 is disordered. Position 2 is an N-acetylalanine (Ala2). Residues Ala15–Thr24 show a composition bias toward polar residues. The span at Asp25–Glu39 shows a compositional bias: basic and acidic residues. 8 helical membrane passes run Leu83–Thr103, Phe134–Thr154, Leu160–Phe180, Leu188–Gly208, Ser209–Leu229, Ile245–Leu267, Thr277–Glu297, and Leu315–Leu335.

This sequence belongs to the UbiA prenyltransferase family. In terms of assembly, interacts with HMGCR and SOAT1.

The protein resides in the endoplasmic reticulum membrane. It is found in the golgi apparatus membrane. Its subcellular location is the mitochondrion membrane. It carries out the reaction menadiol + (2E,6E,10E)-geranylgeranyl diphosphate = menaquinol-4 + diphosphate. It catalyses the reaction all-trans-decaprenyl diphosphate + 4-hydroxybenzoate = 4-hydroxy-3-(all-trans-decaprenyl)benzoate + diphosphate. The protein operates within quinol/quinone metabolism; menaquinone biosynthesis. It functions in the pathway cofactor biosynthesis; ubiquinone biosynthesis. Its function is as follows. Prenyltransferase that mediates the formation of menaquinone-4 (MK-4) and coenzyme Q10. MK-4 is a vitamin K2 isoform required for endothelial cell development. Mediates the conversion of phylloquinone (PK) into MK-4, probably by cleaving the side chain of phylloquinone (PK) to release 2-methyl-1,4-naphthoquinone (menadione; K3) and then prenylating it with geranylgeranyl pyrophosphate (GGPP) to form MK-4. Also plays a role in cardiovascular development independently of MK-4 biosynthesis, by acting as a coenzyme Q10 biosynthetic enzyme: coenzyme Q10, also named ubiquinone, plays an important antioxidant role in the cardiovascular system. Mediates biosynthesis of coenzyme Q10 in the Golgi membrane, leading to protect cardiovascular tissues from NOS3/eNOS-dependent oxidative stress. The polypeptide is UbiA prenyltransferase domain-containing protein 1 (Ubiad1) (Rattus norvegicus (Rat)).